A 362-amino-acid polypeptide reads, in one-letter code: Outer envelope protein 39, chloroplastic (362 aa).

Belongs to the OEP80 (TC 1.B.33.2) family. Expressed in germinating seeds. Expressed in the vasculature of roots, cotyledons and leaves.

The protein localises to the plastid. It localises to the chloroplast outer membrane. Beta-barrel pore-forming protein which possesses voltage-dependent channel activity. Required for proper plastid development. Involved in the maintenance of metabolic homeostasis of full-grown plants. The chain is Outer envelope protein 39, chloroplastic from Arabidopsis thaliana (Mouse-ear cress).